Consider the following 135-residue polypeptide: uncharacterized protein (135 aa).

The tract at residues 1 to 75 (MAAATETGQA…PPPRPPQRRC (75 aa)) is disordered.

This is an uncharacterized protein from Homo sapiens (Human).